The sequence spans 296 residues: uncharacterized protein (296 aa).

A helical transmembrane segment spans residues 7–26; sequence CFSLVCALGASTYLLWRGWL.

It localises to the membrane. This is an uncharacterized protein from Treponema pallidum (strain Nichols).